A 519-amino-acid chain; its full sequence is Lysine 5,6-aminomutase alpha subunit (519 aa).

57 to 59 serves as a coordination point for adenosylcob(III)alamin; the sequence is DEV. Pyridoxal 5'-phosphate is bound by residues 187–192, serine 241, tyrosine 266, arginine 271, and asparagine 302; that span reads RTTGQS.

It belongs to the KamD family. Heterotetramer of 2 alpha and 2 beta subunits. The cofactor is adenosylcob(III)alamin. Pyridoxal 5'-phosphate is required as a cofactor.

The catalysed reaction is (3S)-3,6-diaminohexanoate = (3S,5S)-3,5-diaminohexanoate. It carries out the reaction D-lysine = (2R,5S)-2,5-diaminohexanoate. Its pathway is amino-acid metabolism; lysine degradation. Rapidly inactivated in the presence of D-lysine and to a lesser extent in the absence of adenosylcobalamin (Adocbl). Activity is stable in the presence of Adocbl when D-lysine is absent. Adocbl imparts thermal stability at 37 degrees Celsius. Catalyzes the migration of the L-beta-lysine and D-lysine epsilon amino group to the delta carbon to produce 3,5-diaminohexanoate and 2,5-diaminohexanoate, respectively. The polypeptide is Lysine 5,6-aminomutase alpha subunit (kamD) (Acetoanaerobium sticklandii (strain ATCC 12662 / DSM 519 / JCM 1433 / CCUG 9281 / NCIMB 10654 / HF) (Clostridium sticklandii)).